A 160-amino-acid polypeptide reads, in one-letter code: MARAGNSLISHGRVAENRRARHDYSIEETIEAGLILVGTEVKSLRTGRANIADSYAGPKSGELYLYNAYIPDWTQAVKAFAHEPRQPRKLLVHRREARRLISAINKDGMTLVPLYLYFNDRGFAKVQLGLAKGRKAHDKRQAIKEREWNRDKARVLRDKG.

This sequence belongs to the SmpB family.

The protein resides in the cytoplasm. Functionally, required for rescue of stalled ribosomes mediated by trans-translation. Binds to transfer-messenger RNA (tmRNA), required for stable association of tmRNA with ribosomes. tmRNA and SmpB together mimic tRNA shape, replacing the anticodon stem-loop with SmpB. tmRNA is encoded by the ssrA gene; the 2 termini fold to resemble tRNA(Ala) and it encodes a 'tag peptide', a short internal open reading frame. During trans-translation Ala-aminoacylated tmRNA acts like a tRNA, entering the A-site of stalled ribosomes, displacing the stalled mRNA. The ribosome then switches to translate the ORF on the tmRNA; the nascent peptide is terminated with the 'tag peptide' encoded by the tmRNA and targeted for degradation. The ribosome is freed to recommence translation, which seems to be the essential function of trans-translation. In Rhodospirillum rubrum (strain ATCC 11170 / ATH 1.1.1 / DSM 467 / LMG 4362 / NCIMB 8255 / S1), this protein is SsrA-binding protein.